The primary structure comprises 651 residues: DNA mismatch repair protein MutL (651 aa).

Residues 383 to 405 are disordered; that stretch reads TAAEEPTPAPTSPDLEIGDLDDQ.

It belongs to the DNA mismatch repair MutL/HexB family.

This protein is involved in the repair of mismatches in DNA. It is required for dam-dependent methyl-directed DNA mismatch repair. May act as a 'molecular matchmaker', a protein that promotes the formation of a stable complex between two or more DNA-binding proteins in an ATP-dependent manner without itself being part of a final effector complex. This chain is DNA mismatch repair protein MutL, found in Lacticaseibacillus casei (strain BL23) (Lactobacillus casei).